The sequence spans 503 residues: Glutamate--tRNA ligase (503 aa).

The short motif at 15-25 (PSPTGHLHVGG) is the 'HIGH' region element. Residues 262-266 (KLSKR) carry the 'KMSKS' region motif. Lysine 265 lines the ATP pocket.

Belongs to the class-I aminoacyl-tRNA synthetase family. Glutamate--tRNA ligase type 1 subfamily. In terms of assembly, monomer.

It is found in the cytoplasm. The catalysed reaction is tRNA(Glu) + L-glutamate + ATP = L-glutamyl-tRNA(Glu) + AMP + diphosphate. Its function is as follows. Catalyzes the attachment of glutamate to tRNA(Glu) in a two-step reaction: glutamate is first activated by ATP to form Glu-AMP and then transferred to the acceptor end of tRNA(Glu). The sequence is that of Glutamate--tRNA ligase from Chlorobium phaeobacteroides (strain BS1).